Consider the following 89-residue polypeptide: DNA/RNA-binding protein Alba 2 (89 aa).

An N6-acetyllysine modification is found at K12.

The protein belongs to the histone-like Alba family. Post-translationally, acetylated. Acetylation at Lys-12 decreases DNA-binding affinity.

It is found in the cytoplasm. It localises to the chromosome. Functionally, binds double-stranded DNA tightly but without sequence specificity. Involved in DNA compaction. In Saccharolobus shibatae (strain ATCC 51178 / DSM 5389 / JCM 8931 / NBRC 15437 / B12) (Sulfolobus shibatae), this protein is DNA/RNA-binding protein Alba 2.